A 135-amino-acid polypeptide reads, in one-letter code: Cytochrome b5 (135 aa).

The 77-residue stretch at S4 to D80 folds into the Cytochrome b5 heme-binding domain. Residues H39 and H63 each contribute to the heme site. Residues F106 to I126 form a helical membrane-spanning segment.

This sequence belongs to the cytochrome b5 family.

Its subcellular location is the endoplasmic reticulum membrane. It is found in the microsome membrane. Functionally, membrane bound hemoprotein which function as an electron carrier for several membrane bound oxygenases. The polypeptide is Cytochrome b5 (Cuscuta reflexa (Southern Asian dodder)).